The following is a 395-amino-acid chain: Elongation factor Tu (395 aa).

The tr-type G domain occupies lysine 10–isoleucine 204. The tract at residues glycine 19–threonine 26 is G1. Glycine 19–threonine 26 contacts GTP. Threonine 26 is a Mg(2+) binding site. The tract at residues glycine 60 to asparagine 64 is G2. Residues aspartate 81–glycine 84 are G3. GTP contacts are provided by residues aspartate 81–histidine 85 and asparagine 136–aspartate 139. The segment at asparagine 136–aspartate 139 is G4. The segment at serine 174–leucine 176 is G5.

This sequence belongs to the TRAFAC class translation factor GTPase superfamily. Classic translation factor GTPase family. EF-Tu/EF-1A subfamily. In terms of assembly, monomer.

The protein localises to the cytoplasm. The enzyme catalyses GTP + H2O = GDP + phosphate + H(+). Its function is as follows. GTP hydrolase that promotes the GTP-dependent binding of aminoacyl-tRNA to the A-site of ribosomes during protein biosynthesis. The sequence is that of Elongation factor Tu from Karelsulcia muelleri (strain GWSS) (Sulcia muelleri).